We begin with the raw amino-acid sequence, 205 residues long: Heat shock protein beta-11 (205 aa).

In terms of domain architecture, sHSP spans 67 to 180 (VSPMTTFKPI…NERVIPITYT (114 aa)). The disordered stretch occupies residues 184-205 (KNPALQNSEPENQAVEAEAAEN). Residues 192 to 205 (EPENQAVEAEAAEN) are compositionally biased toward low complexity.

Belongs to the small heat shock protein (HSP20) family. In terms of tissue distribution, expressed specifically in the rostral-most somites at 24 hpf. At 48 hpf, expression continues in the rostral-most somites and also in the notochord. Somite expression was restricted to the vicinity of the horizontal myoseptum. In adults, expressed in the heart.

The sequence is that of Heat shock protein beta-11 (hspb11) from Danio rerio (Zebrafish).